The primary structure comprises 673 residues: UvrABC system protein B (673 aa).

Residues 26-183 (EGLEDGLAHQ…RRLAELQYTR (158 aa)) enclose the Helicase ATP-binding domain. 39–46 (GVTGSGKT) contributes to the ATP binding site. Residues 92–115 (YYDYYQPEAYVPSSDTFIEKDASV) carry the Beta-hairpin motif. Positions 431 to 597 (QVDDLLSEIR…GLNKKVVDIL (167 aa)) constitute a Helicase C-terminal domain. Positions 608-627 (AKGRGKSRPIVEPDNVPMDM) are disordered. The UVR domain occupies 633–668 (QQKIHELEGLMMQHAQNLEFEEAAQIRDQLHQLREL).

It belongs to the UvrB family. Forms a heterotetramer with UvrA during the search for lesions. Interacts with UvrC in an incision complex.

The protein resides in the cytoplasm. Its function is as follows. The UvrABC repair system catalyzes the recognition and processing of DNA lesions. A damage recognition complex composed of 2 UvrA and 2 UvrB subunits scans DNA for abnormalities. Upon binding of the UvrA(2)B(2) complex to a putative damaged site, the DNA wraps around one UvrB monomer. DNA wrap is dependent on ATP binding by UvrB and probably causes local melting of the DNA helix, facilitating insertion of UvrB beta-hairpin between the DNA strands. Then UvrB probes one DNA strand for the presence of a lesion. If a lesion is found the UvrA subunits dissociate and the UvrB-DNA preincision complex is formed. This complex is subsequently bound by UvrC and the second UvrB is released. If no lesion is found, the DNA wraps around the other UvrB subunit that will check the other stand for damage. The protein is UvrABC system protein B of Escherichia fergusonii (strain ATCC 35469 / DSM 13698 / CCUG 18766 / IAM 14443 / JCM 21226 / LMG 7866 / NBRC 102419 / NCTC 12128 / CDC 0568-73).